The primary structure comprises 82 residues: Conotoxin C11GB (82 aa).

An N-terminal signal peptide occupies residues Met-1 to Ala-22. Residues Glu-23–Asp-53 constitute a propeptide that is removed on maturation. 3 cysteine pairs are disulfide-bonded: Cys-55–Cys-72, Cys-62–Cys-76, and Cys-71–Cys-80.

It belongs to the conotoxin O1 superfamily. Expressed by the venom duct.

Its subcellular location is the secreted. The polypeptide is Conotoxin C11GB (Conus vexillum (Flag cone)).